The sequence spans 310 residues: Protein translocase subunit SecF (310 aa).

6 helical membrane passes run 18-38 (FFTISGLLLLLTVGAFIYRGG), 135-155 (QAVYAFLFAFLVMIVYVAFRF), 162-182 (IVSVVGIIHDIVISLGFVILA), 188-208 (ITIVAALLTVVGYSINDTIVL), 240-260 (IVTSLTVFIVACSLFFFGGEV), and 267-287 (IMIIGTVLGVFSTIFVCAPLI).

It belongs to the SecD/SecF family. SecF subfamily. Forms a complex with SecD. Part of the essential Sec protein translocation apparatus which comprises SecA, SecYEG and auxiliary proteins SecDF. Other proteins may also be involved.

The protein localises to the cell inner membrane. Its function is as follows. Part of the Sec protein translocase complex. Interacts with the SecYEG preprotein conducting channel. SecDF uses the proton motive force (PMF) to complete protein translocation after the ATP-dependent function of SecA. The protein is Protein translocase subunit SecF of Endomicrobium trichonymphae.